Reading from the N-terminus, the 312-residue chain is Ribonuclease Z (312 aa).

Residues His-63, His-65, Asp-67, His-68, His-140, Asp-211, and His-269 each coordinate Zn(2+). Asp-67 (proton acceptor) is an active-site residue.

The protein belongs to the RNase Z family. Homodimer. The cofactor is Zn(2+).

The catalysed reaction is Endonucleolytic cleavage of RNA, removing extra 3' nucleotides from tRNA precursor, generating 3' termini of tRNAs. A 3'-hydroxy group is left at the tRNA terminus and a 5'-phosphoryl group is left at the trailer molecule.. Functionally, zinc phosphodiesterase, which displays some tRNA 3'-processing endonuclease activity. Probably involved in tRNA maturation, by removing a 3'-trailer from precursor tRNA. This chain is Ribonuclease Z, found in Shouchella clausii (strain KSM-K16) (Alkalihalobacillus clausii).